Reading from the N-terminus, the 274-residue chain is Cytochrome b-c1 complex subunit Rieske, mitochondrial (274 aa).

Residues 79-103 (SHTDVKVPDFYDYRRLEVLDSTKSS) lie on the Mitochondrial matrix side of the membrane. Residues 104–140 (RESSEARKGFSYLVTAVTTVGVAYAAKNAVTQFISSM) traverse the membrane as a helical segment. At 141-274 (SASADVLAMA…FTSDDMVVVG (134 aa)) the chain is on the mitochondrial intermembrane side. The region spanning 187–272 (EAAVELSQLR…YEFTSDDMVV (86 aa)) is the Rieske domain. The [2Fe-2S] cluster site is built by Cys-217, His-219, Cys-236, His-239, and Ser-241. Cysteines 222 and 238 form a disulfide.

Belongs to the Rieske iron-sulfur protein family. In terms of assembly, component of the ubiquinol-cytochrome c oxidoreductase (cytochrome b-c1 complex, complex III, CIII), a multisubunit enzyme composed of 11 subunits. The complex is composed of 3 respiratory subunits cytochrome b, cytochrome c1 and Rieske protein UQCRFS1, 2 core protein subunits UQCRC1/QCR1 and UQCRC2/QCR2, and 6 low-molecular weight protein subunits UQCRH/QCR6, UQCRB/QCR7, UQCRQ/QCR8, UQCR10/QCR9, UQCR11/QCR10 and subunit 9, the cleavage product of Rieske protein UQCRFS1. The complex exists as an obligatory dimer and forms supercomplexes (SCs) in the inner mitochondrial membrane with NADH-ubiquinone oxidoreductase (complex I, CI) and cytochrome c oxidase (complex IV, CIV), resulting in different assemblies (supercomplex SCI(1)III(2)IV(1) and megacomplex MCI(2)III(2)IV(2)). Incorporation of the Rieske protein UQCRFS1 is the penultimate step in complex III assembly. Interacts with TTC19, which is involved in the clearance of UQCRFS1 fragments. Component of the ubiquinol-cytochrome c oxidoreductase (cytochrome b-c1 complex, complex III, CIII). Subunit 9 corresponds to the mitochondrial targeting sequence (MTS) of Rieske protein UQCRFS1. It is retained after processing and incorporated inside complex III, where it remains bound to the complex and localizes between the 2 core subunits UQCRC1/QCR1 and UQCRC2/QCR2. [2Fe-2S] cluster serves as cofactor. In terms of processing, proteolytic processing is necessary for the correct insertion of UQCRFS1 in the complex III dimer. Several fragments are generated during UQCRFS1 insertion, most probably due to the endogenous matrix-processing peptidase (MPP) activity of the 2 core protein subunits UQCRC1/QCR1 and UQCRC2/QCR2, which are homologous to the 2 mitochondrial-processing peptidase (MPP) subunits beta-MPP and alpha-MPP respectively. The action of the protease is also necessary for the clearance of the UQCRFS1 fragments.

The protein localises to the mitochondrion inner membrane. The enzyme catalyses a quinol + 2 Fe(III)-[cytochrome c](out) = a quinone + 2 Fe(II)-[cytochrome c](out) + 2 H(+)(out). Its function is as follows. Component of the ubiquinol-cytochrome c oxidoreductase, a multisubunit transmembrane complex that is part of the mitochondrial electron transport chain which drives oxidative phosphorylation. The respiratory chain contains 3 multisubunit complexes succinate dehydrogenase (complex II, CII), ubiquinol-cytochrome c oxidoreductase (cytochrome b-c1 complex, complex III, CIII) and cytochrome c oxidase (complex IV, CIV), that cooperate to transfer electrons derived from NADH and succinate to molecular oxygen, creating an electrochemical gradient over the inner membrane that drives transmembrane transport and the ATP synthase. The cytochrome b-c1 complex catalyzes electron transfer from ubiquinol to cytochrome c, linking this redox reaction to translocation of protons across the mitochondrial inner membrane, with protons being carried across the membrane as hydrogens on the quinol. In the process called Q cycle, 2 protons are consumed from the matrix, 4 protons are released into the intermembrane space and 2 electrons are passed to cytochrome c. The Rieske protein is a catalytic core subunit containing a [2Fe-2S] iron-sulfur cluster. It cycles between 2 conformational states during catalysis to transfer electrons from the quinol bound in the Q(0) site in cytochrome b to cytochrome c1. Incorporation of UQCRFS1 is the penultimate step in complex III assembly. In terms of biological role, component of the ubiquinol-cytochrome c oxidoreductase (cytochrome b-c1 complex, complex III, CIII). UQCRFS1 undergoes proteolytic processing once it is incorporated in the complex III dimer. One of the fragments, called subunit 9, corresponds to its mitochondrial targeting sequence (MTS). The proteolytic processing is necessary for the correct insertion of UQCRFS1 in the complex III dimer, but the persistence of UQCRFS1-derived fragments may prevent newly imported UQCRFS1 to be processed and assembled into complex III and is detrimental for the complex III structure and function. The chain is Cytochrome b-c1 complex subunit Rieske, mitochondrial (UQCRFS1) from Theropithecus gelada (Gelada baboon).